We begin with the raw amino-acid sequence, 539 residues long: Chaperonin GroEL 2 (539 aa).

ATP is bound by residues 30 to 33 (TLGP), lysine 51, 87 to 91 (DGTTT), glycine 415, 480 to 482 (NAA), and aspartate 496.

Belongs to the chaperonin (HSP60) family. As to quaternary structure, forms a cylinder of 14 subunits composed of two heptameric rings stacked back-to-back. Interacts with the co-chaperonin GroES.

The protein localises to the cytoplasm. It carries out the reaction ATP + H2O + a folded polypeptide = ADP + phosphate + an unfolded polypeptide.. In terms of biological role, together with its co-chaperonin GroES, plays an essential role in assisting protein folding. The GroEL-GroES system forms a nano-cage that allows encapsulation of the non-native substrate proteins and provides a physical environment optimized to promote and accelerate protein folding. The sequence is that of Chaperonin GroEL 2 from Sphingopyxis alaskensis (strain DSM 13593 / LMG 18877 / RB2256) (Sphingomonas alaskensis).